The sequence spans 344 residues: MDENRSKALAAALSQIEKQFGKGSIMRMGDTDVAADIQAVSTGSLGLDIALGIGGLPRGRIVEIYGPESSGKTTLTLSVIAQMQKLGGTAAFIDAEHALDPVYAQKLGVNVSDLLISQPDTGEQALEIADMLVRSGSVDVVVVDSVAALTPKAEIEGEMGDSHMGLQARLMSQALRKLTANIKRTNTLVIFINQIRMKIGLMFGNPETTTGGNALKFYASVRLDIRRTGAIKKGDEVTGSETRVKVVKNNVAPPFKLAEFDILYGEGISREGEIIELGVNLKLIEKAGAWYSYKGEKIGQGKDNAREFLREHPEIANEIDAKIREHSNLANAAMTTAPDEESDE.

66–73 lines the ATP pocket; it reads GPESSGKT.

The protein belongs to the RecA family.

Its subcellular location is the cytoplasm. In terms of biological role, can catalyze the hydrolysis of ATP in the presence of single-stranded DNA, the ATP-dependent uptake of single-stranded DNA by duplex DNA, and the ATP-dependent hybridization of homologous single-stranded DNAs. It interacts with LexA causing its activation and leading to its autocatalytic cleavage. The sequence is that of Protein RecA from Methylobacillus flagellatus.